Here is a 487-residue protein sequence, read N- to C-terminus: L-carnitine dehydrogenase/betainyl-CoA thioesterase (487 aa).

Positions 1–327 are L-carnitine dehydrogenase; that stretch reads MTTAAIIGGG…DAALKPKALP (327 aa). 8 to 13 serves as a coordination point for NAD(+); sequence GGGVIG. Residues 328–487 form a betainyl-CoA thioesterase region; that stretch reads DLDTADLTQP…GAGSAIRKPA (160 aa).

This sequence in the N-terminal section; belongs to the 3-hydroxyacyl-CoA dehydrogenase family. L-carnitine dehydrogenase subfamily. The protein in the C-terminal section; belongs to the betainyl-CoA thioesterase family. As to quaternary structure, homodimer.

It is found in the cytoplasm. It catalyses the reaction carnitine + NAD(+) = 3-dehydrocarnitine + NADH + H(+). The catalysed reaction is N,N,N-trimethylglycyl-CoA + H2O = glycine betaine + CoA + H(+). Its pathway is amine and polyamine metabolism; carnitine metabolism. Multifunctional enzyme that catalyzes the NAD(+)-dependent oxidation of L-carnitine to 3-dehydrocarnitine and the cleavage of betainyl-CoA (N,N,N-trimethylglycyl-CoA) into glycine betaine and coenzyme A. In Ruegeria pomeroyi (strain ATCC 700808 / DSM 15171 / DSS-3) (Silicibacter pomeroyi), this protein is L-carnitine dehydrogenase/betainyl-CoA thioesterase.